The sequence spans 128 residues: Large ribosomal subunit protein bL17 (128 aa).

Belongs to the bacterial ribosomal protein bL17 family. As to quaternary structure, part of the 50S ribosomal subunit. Contacts protein L32.

In Hydrogenovibrio crunogenus (strain DSM 25203 / XCL-2) (Thiomicrospira crunogena), this protein is Large ribosomal subunit protein bL17.